Here is a 345-residue protein sequence, read N- to C-terminus: Aspartate--ammonia ligase (345 aa).

This sequence belongs to the class-II aminoacyl-tRNA synthetase family. AsnA subfamily.

Its subcellular location is the cytoplasm. It catalyses the reaction L-aspartate + NH4(+) + ATP = L-asparagine + AMP + diphosphate + H(+). It functions in the pathway amino-acid biosynthesis; L-asparagine biosynthesis; L-asparagine from L-aspartate (ammonia route): step 1/1. This chain is Aspartate--ammonia ligase, found in Bacteroides fragilis (strain ATCC 25285 / DSM 2151 / CCUG 4856 / JCM 11019 / LMG 10263 / NCTC 9343 / Onslow / VPI 2553 / EN-2).